Here is a 611-residue protein sequence, read N- to C-terminus: Mitochondrial distribution and morphology protein 34 (611 aa).

Residues 1–195 form the SMP-LTD domain; the sequence is MAFNFNWSPL…LPAIIHRLSL (195 aa). Residues 325 to 342 are compositionally biased toward polar residues; the sequence is SAPLSSQDTASVASSQSR. 4 disordered regions span residues 325 to 347, 361 to 402, 415 to 544, and 587 to 611; these read SAPL…GLPS, RHSK…STIT, SIIP…PTYT, and SYVG…AYRH. Over residues 361–373 the composition is skewed to basic residues; it reads RHSKAHARKRKKR. Basic and acidic residues-rich tracts occupy residues 374 to 385 and 444 to 459; these read VIDLRPHRKPTD and TLRD…ERTN. Pro residues predominate over residues 520–529; that stretch reads PLGPPAPAPI.

It belongs to the MDM34 family. Component of the ER-mitochondria encounter structure (ERMES) or MDM complex, composed of MMM1, MDM10, MDM12 and MDM34.

The protein localises to the mitochondrion outer membrane. In terms of biological role, component of the ERMES/MDM complex, which serves as a molecular tether to connect the endoplasmic reticulum (ER) and mitochondria. Components of this complex are involved in the control of mitochondrial shape and protein biogenesis, and function in nonvesicular lipid trafficking between the ER and mitochondria. MDM34 is required for the interaction of the ER-resident membrane protein MMM1 and the outer mitochondrial membrane-resident beta-barrel protein MDM10. In Paracoccidioides brasiliensis (strain Pb18), this protein is Mitochondrial distribution and morphology protein 34.